The chain runs to 344 residues: S-adenosylmethionine:tRNA ribosyltransferase-isomerase (344 aa).

Belongs to the QueA family. Monomer.

The protein localises to the cytoplasm. The enzyme catalyses 7-aminomethyl-7-carbaguanosine(34) in tRNA + S-adenosyl-L-methionine = epoxyqueuosine(34) in tRNA + adenine + L-methionine + 2 H(+). Its pathway is tRNA modification; tRNA-queuosine biosynthesis. Its function is as follows. Transfers and isomerizes the ribose moiety from AdoMet to the 7-aminomethyl group of 7-deazaguanine (preQ1-tRNA) to give epoxyqueuosine (oQ-tRNA). This chain is S-adenosylmethionine:tRNA ribosyltransferase-isomerase, found in Nitrosococcus oceani (strain ATCC 19707 / BCRC 17464 / JCM 30415 / NCIMB 11848 / C-107).